Reading from the N-terminus, the 537-residue chain is CTP synthase (537 aa).

An amidoligase domain region spans residues 1 to 265 (MTKYIFVTGG…GKYLTKRLKL (265 aa)). CTP is bound at residue S13. S13 is a binding site for UTP. 14–19 (GLGKGI) provides a ligand contact to ATP. Y54 serves as a coordination point for L-glutamine. D71 serves as a coordination point for ATP. Positions 71 and 139 each coordinate Mg(2+). CTP is bound by residues 146–148 (DIE), 186–191 (KTKPTQ), and K222. UTP is bound by residues 186–191 (KTKPTQ) and K222. A Glutamine amidotransferase type-1 domain is found at 290-532 (EIAIVGKYVK…VRAAKEYKQE (243 aa)). Residue G351 participates in L-glutamine binding. C378 functions as the Nucleophile; for glutamine hydrolysis in the catalytic mechanism. L-glutamine-binding positions include 379-382 (FGFQ), E402, and R459. Residues H505 and E507 contribute to the active site.

This sequence belongs to the CTP synthase family. In terms of assembly, homotetramer.

The catalysed reaction is UTP + L-glutamine + ATP + H2O = CTP + L-glutamate + ADP + phosphate + 2 H(+). It carries out the reaction L-glutamine + H2O = L-glutamate + NH4(+). It catalyses the reaction UTP + NH4(+) + ATP = CTP + ADP + phosphate + 2 H(+). The protein operates within pyrimidine metabolism; CTP biosynthesis via de novo pathway; CTP from UDP: step 2/2. Its activity is regulated as follows. Allosterically activated by GTP, when glutamine is the substrate; GTP has no effect on the reaction when ammonia is the substrate. The allosteric effector GTP functions by stabilizing the protein conformation that binds the tetrahedral intermediate(s) formed during glutamine hydrolysis. Inhibited by the product CTP, via allosteric rather than competitive inhibition. In terms of biological role, catalyzes the ATP-dependent amination of UTP to CTP with either L-glutamine or ammonia as the source of nitrogen. Regulates intracellular CTP levels through interactions with the four ribonucleotide triphosphates. This chain is CTP synthase, found in Pyrococcus furiosus (strain ATCC 43587 / DSM 3638 / JCM 8422 / Vc1).